A 466-amino-acid chain; its full sequence is Ribulose bisphosphate carboxylase large chain (466 aa).

Lys5 carries the N6,N6,N6-trimethyllysine modification. Substrate is bound by residues Asn114 and Thr164. Lys166 functions as the Proton acceptor in the catalytic mechanism. Lys168 is a substrate binding site. 3 residues coordinate Mg(2+): Lys192, Asp194, and Glu195. Lys192 bears the N6-carboxylysine mark. The active-site Proton acceptor is the His285. Substrate-binding residues include Arg286, His318, and Ser370.

Belongs to the RuBisCO large chain family. Type I subfamily. In terms of assembly, heterohexadecamer of 8 large chains and 8 small chains; disulfide-linked. The disulfide link is formed within the large subunit homodimers. It depends on Mg(2+) as a cofactor. Post-translationally, the disulfide bond which can form in the large chain dimeric partners within the hexadecamer appears to be associated with oxidative stress and protein turnover.

Its subcellular location is the plastid. It localises to the chloroplast. It catalyses the reaction 2 (2R)-3-phosphoglycerate + 2 H(+) = D-ribulose 1,5-bisphosphate + CO2 + H2O. It carries out the reaction D-ribulose 1,5-bisphosphate + O2 = 2-phosphoglycolate + (2R)-3-phosphoglycerate + 2 H(+). In terms of biological role, ruBisCO catalyzes two reactions: the carboxylation of D-ribulose 1,5-bisphosphate, the primary event in carbon dioxide fixation, as well as the oxidative fragmentation of the pentose substrate in the photorespiration process. Both reactions occur simultaneously and in competition at the same active site. The chain is Ribulose bisphosphate carboxylase large chain from Gonopterodendron arboreum (Maracaibo lignum-vitae).